A 296-amino-acid polypeptide reads, in one-letter code: Pantothenate synthetase (296 aa).

31–38 (MGYLHEGH) is an ATP binding site. Residue H38 is the Proton donor of the active site. Q62 serves as a coordination point for (R)-pantoate. Q62 contacts beta-alanine. An ATP-binding site is contributed by 148 to 151 (GEKD). Q154 contacts (R)-pantoate. ATP-binding positions include V177 and 185–188 (LSSR).

The protein belongs to the pantothenate synthetase family. In terms of assembly, homodimer.

Its subcellular location is the cytoplasm. The enzyme catalyses (R)-pantoate + beta-alanine + ATP = (R)-pantothenate + AMP + diphosphate + H(+). It participates in cofactor biosynthesis; (R)-pantothenate biosynthesis; (R)-pantothenate from (R)-pantoate and beta-alanine: step 1/1. Catalyzes the condensation of pantoate with beta-alanine in an ATP-dependent reaction via a pantoyl-adenylate intermediate. The sequence is that of Pantothenate synthetase from Deinococcus geothermalis (strain DSM 11300 / CIP 105573 / AG-3a).